A 123-amino-acid polypeptide reads, in one-letter code: Protein Wnt-3b (123 aa).

The O-palmitoleoyl serine; by PORCN moiety is linked to residue S1. The cysteines at positions 89 and 104 are disulfide-linked. Residue N90 is glycosylated (N-linked (GlcNAc...) asparagine).

It belongs to the Wnt family. Post-translationally, palmitoleoylation is required for efficient binding to frizzled receptors. Depalmitoleoylation leads to Wnt signaling pathway inhibition.

Its subcellular location is the secreted. It localises to the extracellular space. It is found in the extracellular matrix. Ligand for members of the frizzled family of seven transmembrane receptors. Probable developmental protein. May be a signaling molecule which affects the development of discrete regions of tissues. Is likely to signal over only few cell diameters. In Meleagris gallopavo (Wild turkey), this protein is Protein Wnt-3b (WNT3B).